The chain runs to 469 residues: GDP-fucose protein O-fucosyltransferase 3 (469 aa).

The Cytoplasmic segment spans residues 1-9 (MVNRIWEKR). Residues 10–30 (FWISCFFIIFLFILVIFQVMV) form a helical; Signal-anchor for type II membrane protein membrane-spanning segment. Over 31-469 (ELGRFEKKET…EFWNLVFKFW (439 aa)) the chain is Lumenal. N-linked (GlcNAc...) asparagine glycosylation is found at Asn-100, Asn-158, Asn-308, and Asn-333. The cysteines at positions 379 and 382 are disulfide-linked. Asn-455 is a glycosylation site (N-linked (GlcNAc...) asparagine).

Belongs to the glycosyltransferase 10 family.

It localises to the endoplasmic reticulum membrane. The enzyme catalyses L-threonyl-[protein] + GDP-beta-L-fucose = 3-O-(alpha-L-fucosyl)-L-threonyl-[protein] + GDP + H(+). It carries out the reaction L-seryl-[protein] + GDP-beta-L-fucose = 3-O-(alpha-L-fucosyl)-L-seryl-[protein] + GDP + H(+). It participates in protein modification; protein glycosylation. Protein O-fucosyltransferase that specifically catalyzes O-fucosylation of serine or threonine residues in EMI domains of target proteins. Attaches fucose through an O-glycosidic linkage. O-fucosylation of EMI domain-containing proteins may be required for facilitating protein folding and secretion. In Xenopus laevis (African clawed frog), this protein is GDP-fucose protein O-fucosyltransferase 3 (fut10).